The chain runs to 382 residues: MTANLLDYDLEGLAAFCEGLGEKRFRATQLFRWIHQKGASDFGQMTDLARSLREKLAGSAHIQGPKVVSRHDSADGTIKWLFDVGAGDVIEAVFIPETDRGTLCISSQAGCAVGCRFCSTGHQGFSRNLTTGEIVSQLWFAEHFLRQHLGRQERVISNVVMMGMGEPLQNYSQLVPALRVMLDDHGYGLSRRRVTVSTSGVVPMIDRLAKDCPVALAVSLHAPQDALRDSLVPLNKKYPIAELLQACTRYQASAPRDFITFEYCMLDGVNDQPEHARQLVALMQNHSAGGLSCKFNLIPFNPFPASGLKRSAMPQVAAFAKILMDAGIVTTVRKTRGDDIDAACGQLAGDVQDRTSVDRRIAAQRQGMLGGIKVVVAKGMDV.

The Proton acceptor role is filled by E91. Positions 97-339 constitute a Radical SAM core domain; the sequence is ETDRGTLCIS…TTVRKTRGDD (243 aa). C104 and C344 are joined by a disulfide. The [4Fe-4S] cluster site is built by C111, C115, and C118. S-adenosyl-L-methionine is bound by residues 165–166, S197, 219–221, and N301; these read GE and SLH. C344 functions as the S-methylcysteine intermediate in the catalytic mechanism.

It belongs to the radical SAM superfamily. RlmN family. [4Fe-4S] cluster serves as cofactor.

The protein localises to the cytoplasm. It catalyses the reaction adenosine(2503) in 23S rRNA + 2 reduced [2Fe-2S]-[ferredoxin] + 2 S-adenosyl-L-methionine = 2-methyladenosine(2503) in 23S rRNA + 5'-deoxyadenosine + L-methionine + 2 oxidized [2Fe-2S]-[ferredoxin] + S-adenosyl-L-homocysteine. It carries out the reaction adenosine(37) in tRNA + 2 reduced [2Fe-2S]-[ferredoxin] + 2 S-adenosyl-L-methionine = 2-methyladenosine(37) in tRNA + 5'-deoxyadenosine + L-methionine + 2 oxidized [2Fe-2S]-[ferredoxin] + S-adenosyl-L-homocysteine. Specifically methylates position 2 of adenine 2503 in 23S rRNA and position 2 of adenine 37 in tRNAs. m2A2503 modification seems to play a crucial role in the proofreading step occurring at the peptidyl transferase center and thus would serve to optimize ribosomal fidelity. The protein is Dual-specificity RNA methyltransferase RlmN of Polaromonas sp. (strain JS666 / ATCC BAA-500).